Here is a 123-residue protein sequence, read N- to C-terminus: Histone H2B (123 aa).

A disordered region spans residues 1 to 31; the sequence is MPPKVASKGAKKAASKAKAARSGEKKKKRRR. The segment covering 9–31 has biased composition (basic residues); that stretch reads GAKKAASKAKAARSGEKKKKRRR. Serine 110 carries an O-linked (GlcNAc) serine glycan. Lysine 118 is covalently cross-linked (Glycyl lysine isopeptide (Lys-Gly) (interchain with G-Cter in ubiquitin)).

The protein belongs to the histone H2B family. The nucleosome is a histone octamer containing two molecules each of H2A, H2B, H3 and H4 assembled in one H3-H4 heterotetramer and two H2A-H2B heterodimers. The octamer wraps approximately 147 bp of DNA. Post-translationally, monoubiquitination of Lys-118 gives a specific tag for epigenetic transcriptional activation and is also prerequisite for histone H3 'Lys-4' and 'Lys-79' methylation. In terms of processing, glcNAcylation at Ser-110 promotes monoubiquitination of Lys-118. It fluctuates in response to extracellular glucose, and associates with transcribed genes.

The protein localises to the nucleus. It is found in the chromosome. In terms of biological role, core component of nucleosome. Nucleosomes wrap and compact DNA into chromatin, limiting DNA accessibility to the cellular machineries which require DNA as a template. Histones thereby play a central role in transcription regulation, DNA repair, DNA replication and chromosomal stability. DNA accessibility is regulated via a complex set of post-translational modifications of histones, also called histone code, and nucleosome remodeling. In Platynereis dumerilii (Dumeril's clam worm), this protein is Histone H2B.